A 199-amino-acid chain; its full sequence is GTP cyclohydrolase-2 (199 aa).

GTP is bound at residue 49 to 53 (RIHSE). Residues cysteine 54, cysteine 65, and cysteine 67 each coordinate Zn(2+). GTP-binding positions include glutamine 70, 92-94 (EGR), and threonine 114. The active-site Proton acceptor is the aspartate 126. Catalysis depends on arginine 128, which acts as the Nucleophile. Positions 149 and 154 each coordinate GTP.

The protein belongs to the GTP cyclohydrolase II family. As to quaternary structure, homodimer. Zn(2+) is required as a cofactor.

It catalyses the reaction GTP + 4 H2O = 2,5-diamino-6-hydroxy-4-(5-phosphoribosylamino)-pyrimidine + formate + 2 phosphate + 3 H(+). It functions in the pathway cofactor biosynthesis; riboflavin biosynthesis; 5-amino-6-(D-ribitylamino)uracil from GTP: step 1/4. Catalyzes the conversion of GTP to 2,5-diamino-6-ribosylamino-4(3H)-pyrimidinone 5'-phosphate (DARP), formate and pyrophosphate. In Proteus mirabilis (strain HI4320), this protein is GTP cyclohydrolase-2.